The sequence spans 779 residues: Protein phosphatase 1 regulatory subunit 21 (779 aa).

Coiled-coil stretches lie at residues alanine 2 to leucine 212 and threonine 556 to glutamine 614. Disordered regions lie at residues glutamate 85–glutamine 105 and threonine 612–proline 637. Over residues glutamate 96–glutamine 105 the composition is skewed to low complexity. Over residues glutamate 624–proline 637 the composition is skewed to basic and acidic residues. Residues alanine 693–aspartate 739 adopt a coiled-coil conformation. The disordered stretch occupies residues glutamate 760–arginine 779.

Component of the FERRY complex.

Its subcellular location is the early endosome. Its function is as follows. Component of the FERRY complex (Five-subunit Endosomal Rab5 and RNA/ribosome intermediary). The FERRY complex directly interacts with mRNAs and RAB5A, and functions as a RAB5A effector involved in the localization and the distribution of specific mRNAs most likely by mediating their endosomal transport. The complex recruits mRNAs and ribosomes to early endosomes through direct mRNA-interaction. Putative regulator of protein phosphatase 1 (PP1) activity. May play a role in the endosomal sorting process or in endosome maturation pathway. The protein is Protein phosphatase 1 regulatory subunit 21 (PPP1R21) of Gallus gallus (Chicken).